The following is a 37-amino-acid chain: Large ribosomal subunit protein bL36c (37 aa).

This sequence belongs to the bacterial ribosomal protein bL36 family.

The protein resides in the plastid. It is found in the chloroplast. The protein is Large ribosomal subunit protein bL36c (rpl36) of Chlamydomonas reinhardtii (Chlamydomonas smithii).